A 284-amino-acid chain; its full sequence is Pantothenate synthetase (284 aa).

Position 30–37 (30–37) interacts with ATP; it reads MGNLHDGH. The active-site Proton donor is H37. Q61 is a (R)-pantoate binding site. Q61 contributes to the beta-alanine binding site. An ATP-binding site is contributed by 149 to 152; the sequence is GEKD. Q155 contacts (R)-pantoate. Residues V178 and 186–189 contribute to the ATP site; that span reads LSSR.

The protein belongs to the pantothenate synthetase family. As to quaternary structure, homodimer.

The protein localises to the cytoplasm. It carries out the reaction (R)-pantoate + beta-alanine + ATP = (R)-pantothenate + AMP + diphosphate + H(+). It functions in the pathway cofactor biosynthesis; (R)-pantothenate biosynthesis; (R)-pantothenate from (R)-pantoate and beta-alanine: step 1/1. Its function is as follows. Catalyzes the condensation of pantoate with beta-alanine in an ATP-dependent reaction via a pantoyl-adenylate intermediate. The sequence is that of Pantothenate synthetase from Enterobacter sp. (strain 638).